The chain runs to 128 residues: Ribosome-binding factor A (128 aa).

This sequence belongs to the RbfA family. Monomer. Binds 30S ribosomal subunits, but not 50S ribosomal subunits or 70S ribosomes.

It localises to the cytoplasm. In terms of biological role, one of several proteins that assist in the late maturation steps of the functional core of the 30S ribosomal subunit. Associates with free 30S ribosomal subunits (but not with 30S subunits that are part of 70S ribosomes or polysomes). Required for efficient processing of 16S rRNA. May interact with the 5'-terminal helix region of 16S rRNA. The protein is Ribosome-binding factor A of Haemophilus influenzae (strain 86-028NP).